The primary structure comprises 385 residues: S-adenosylmethionine synthase (385 aa).

Histidine 15 provides a ligand contact to ATP. Mg(2+) is bound at residue aspartate 17. Glutamate 43 serves as a coordination point for K(+). Glutamate 56 and glutamine 99 together coordinate L-methionine. The flexible loop stretch occupies residues 99–109; that stretch reads QSPEIAQGVDE. ATP contacts are provided by residues 164–166, 230–231, aspartate 239, 245–246, alanine 262, and lysine 266; these read DAK, RF, and RK. Residue aspartate 239 coordinates L-methionine. Position 270 (lysine 270) interacts with L-methionine.

Belongs to the AdoMet synthase family. Homotetramer; dimer of dimers. Mg(2+) serves as cofactor. It depends on K(+) as a cofactor.

The protein resides in the cytoplasm. The catalysed reaction is L-methionine + ATP + H2O = S-adenosyl-L-methionine + phosphate + diphosphate. It functions in the pathway amino-acid biosynthesis; S-adenosyl-L-methionine biosynthesis; S-adenosyl-L-methionine from L-methionine: step 1/1. Its function is as follows. Catalyzes the formation of S-adenosylmethionine (AdoMet) from methionine and ATP. The overall synthetic reaction is composed of two sequential steps, AdoMet formation and the subsequent tripolyphosphate hydrolysis which occurs prior to release of AdoMet from the enzyme. This is S-adenosylmethionine synthase from Hydrogenovibrio crunogenus (strain DSM 25203 / XCL-2) (Thiomicrospira crunogena).